Consider the following 309-residue polypeptide: Probable manganese-dependent inorganic pyrophosphatase (309 aa).

Residues His9, Asp13, Asp15, Asp75, His97, and Asp149 each coordinate Mn(2+).

The protein belongs to the PPase class C family. Requires Mn(2+) as cofactor.

It is found in the cytoplasm. The enzyme catalyses diphosphate + H2O = 2 phosphate + H(+). The protein is Probable manganese-dependent inorganic pyrophosphatase of Bacillus cereus (strain B4264).